We begin with the raw amino-acid sequence, 322 residues long: Pilin gene-inverting protein (322 aa).

Its function is as follows. May be the site-specific invertase required for pilin gene inversion. Moraxella can express either a Q or I pilin; the inversion of 2 kb of DNA determines which pilin is expressed. This is Pilin gene-inverting protein (piv) from Moraxella lacunata.